The sequence spans 316 residues: tRNA dimethylallyltransferase (316 aa).

17–24 (GPTASGKT) lines the ATP pocket. 19–24 (TASGKT) provides a ligand contact to substrate. Interaction with substrate tRNA stretches follow at residues 42 to 45 (DSAL), 166 to 170 (QRLSR), and 247 to 252 (RCVGYR).

The protein belongs to the IPP transferase family. Monomer. Mg(2+) serves as cofactor.

It carries out the reaction adenosine(37) in tRNA + dimethylallyl diphosphate = N(6)-dimethylallyladenosine(37) in tRNA + diphosphate. Its function is as follows. Catalyzes the transfer of a dimethylallyl group onto the adenine at position 37 in tRNAs that read codons beginning with uridine, leading to the formation of N6-(dimethylallyl)adenosine (i(6)A). This is tRNA dimethylallyltransferase from Salmonella arizonae (strain ATCC BAA-731 / CDC346-86 / RSK2980).